Here is a 153-residue protein sequence, read N- to C-terminus: Large ribosomal subunit protein bL9 (153 aa).

It belongs to the bacterial ribosomal protein bL9 family.

In terms of biological role, binds to the 23S rRNA. This chain is Large ribosomal subunit protein bL9, found in Blochmanniella pennsylvanica (strain BPEN).